The sequence spans 464 residues: tRNA modification GTPase MnmE (464 aa).

3 residues coordinate (6S)-5-formyl-5,6,7,8-tetrahydrofolate: R25, E87, and K130. The 161-residue stretch at 226 to 386 folds into the TrmE-type G domain; the sequence is GLSVVLAGQP…LREELLRIAG (161 aa). N236 serves as a coordination point for K(+). GTP contacts are provided by residues 236–241, 255–261, and 280–283; these read NVGKSS, TPIAGTT, and DTAG. S240 lines the Mg(2+) pocket. Residues T255, I257, and T260 each contribute to the K(+) site. T261 contributes to the Mg(2+) binding site. Position 464 (K464) interacts with (6S)-5-formyl-5,6,7,8-tetrahydrofolate.

Belongs to the TRAFAC class TrmE-Era-EngA-EngB-Septin-like GTPase superfamily. TrmE GTPase family. Homodimer. Heterotetramer of two MnmE and two MnmG subunits. It depends on K(+) as a cofactor.

The protein localises to the cytoplasm. In terms of biological role, exhibits a very high intrinsic GTPase hydrolysis rate. Involved in the addition of a carboxymethylaminomethyl (cmnm) group at the wobble position (U34) of certain tRNAs, forming tRNA-cmnm(5)s(2)U34. The sequence is that of tRNA modification GTPase MnmE from Paraburkholderia xenovorans (strain LB400).